Reading from the N-terminus, the 1703-residue chain is Ferlin 2 (1703 aa).

2 consecutive C2 domains span residues Ile18–Leu141 and Lys207–Phe332. Disordered regions lie at residues Asn913–Asn937, Asn970–Thr1025, and Lys1194–Gly1228. Residues Asn916–Asp928 are compositionally biased toward acidic residues. The segment covering Gln979–Ser991 has biased composition (polar residues). Over residues Ser993 to Ser1009 the composition is skewed to basic and acidic residues. A compositionally biased stretch (low complexity) spans Asn1198 to Ser1209. The 130-residue stretch at Val1466–Phe1595 folds into the C2 3 domain. A disordered region spans residues Ala1628–Lys1651. Basic and acidic residues predominate over residues Pro1641–Lys1651. Residues Phe1681–Leu1701 form a helical membrane-spanning segment.

It belongs to the ferlin family.

Its subcellular location is the membrane. Its function is as follows. Regulates mucocyst exocytosis. This Tetrahymena thermophila (strain SB210) protein is Ferlin 2.